Reading from the N-terminus, the 517-residue chain is Protein ERGIC-53 (517 aa).

An N-terminal signal peptide occupies residues 1-30; sequence MAVSRRRVPQAGARSFFCALLLSFSQFTGS. Topologically, residues 31 to 484 are lumenal; that stretch reads DGTGGDAAAP…DLPPFPSCLS (454 aa). The L-type lectin-like domain maps to 52–275; sequence RRFEYKYSFK…DVLSFLTFQL (224 aa). A carbohydrate contacts are provided by S96 and D129. Residues D160, F162, and N164 each contribute to the Ca(2+) site. The a carbohydrate site is built by N164 and H186. Position 189 (D189) interacts with Ca(2+). A disulfide bridge connects residues C198 and C238. 259-261 contacts a carbohydrate; the sequence is GGL. S433 bears the Phosphoserine mark. The chain crosses the membrane as a helical span at residues 485-505; sequence TIHFVIFVVVQTVLFVGYIMY. Residues 506-517 are Cytoplasmic-facing; the sequence is RTQQEAAAKKFF. The segment at 506-517 is mediates interaction with RAB3GAP1, RAB3GAP2 and UBXN6; it reads RTQQEAAAKKFF. Residues 516-517 carry the ER export motif motif; it reads FF.

Exists both as a covalent disulfide-linked homohexamer, and a complex of three disulfide-linked dimers non-covalently kept together. Interacts with MCFD2. May interact with TMEM115. Interacts with RAB3GAP1 and RAB3GAP2. Interacts with UBXN6. Interacts with SERPINA1/alpha1-antitrypsin. Interacts with BET1.

It is found in the endoplasmic reticulum-Golgi intermediate compartment membrane. The protein resides in the golgi apparatus membrane. Its subcellular location is the endoplasmic reticulum membrane. In terms of biological role, mannose-specific lectin. May recognize sugar residues of glycoproteins, glycolipids, or glycosylphosphatidyl inositol anchors and may be involved in the sorting or recycling of proteins, lipids, or both. The LMAN1-MCFD2 complex forms a specific cargo receptor for the ER-to-Golgi transport of selected proteins. The protein is Protein ERGIC-53 (Lman1) of Mus musculus (Mouse).